The chain runs to 264 residues: Iodotyrosine deiodinase (264 aa).

FMN-binding positions include 75 to 79 and 103 to 104; these read RRTVR and SG. 3-iodo-L-tyrosine-binding residues include Ala105, Glu132, Tyr136, and Lys157. FMN contacts are provided by residues 212–214 and Arg254; that span reads TST.

This sequence belongs to the nitroreductase family. FMN serves as cofactor.

The catalysed reaction is 2 iodide + L-tyrosine + 2 NADP(+) = 3,5-diiodo-L-tyrosine + 2 NADPH + H(+). It carries out the reaction iodide + L-tyrosine + NADP(+) = 3-iodo-L-tyrosine + NADPH. It catalyses the reaction 3-iodo-L-tyrosine + iodide + NADP(+) = 3,5-diiodo-L-tyrosine + NADPH + H(+). The enzyme catalyses L-tyrosine + chloride + NADP(+) = 3-chloro-L-tyrosine + NADPH. The catalysed reaction is bromide + L-tyrosine + NADP(+) = 3-bromo-L-tyrosine + NADPH. Catalyzes the dehalogenation of halotyrosines such as 3,5-diiodo-L-tyrosine. Likely to also catalyze the dehalogenation of other halotyrosines such as 3-bromo-L-tyrosine, 3-chloro-L-tyrosine and 3-iodo-L-tyrosine. This chain is Iodotyrosine deiodinase, found in Nematostella vectensis (Starlet sea anemone).